Here is a 203-residue protein sequence, read N- to C-terminus: Endo-type membrane-bound lytic murein transglycosylase A (203 aa).

The signal sequence occupies residues methionine 1–glycine 15. Cysteine 16 carries N-palmitoyl cysteine lipidation. A lipid anchor (S-diacylglycerol cysteine) is attached at cysteine 16.

This sequence belongs to the transglycosylase Slt family.

It localises to the cell outer membrane. The enzyme catalyses Endolytic cleavage of the (1-&gt;4)-beta-glycosidic linkage between N-acetylmuramic acid (MurNAc) and N-acetylglucosamine (GlcNAc) residues in peptidoglycan with concomitant formation of a 1,6-anhydrobond in the MurNAc residue.. Murein-degrading enzyme. May play a role in recycling of muropeptides during cell elongation and/or cell division. Preferentially cleaves at a distance of more than two disaccharide units from the ends of the glycan chain. The sequence is that of Endo-type membrane-bound lytic murein transglycosylase A from Enterobacter sp. (strain 638).